Here is a 187-residue protein sequence, read N- to C-terminus: Threonylcarbamoyl-AMP synthase (187 aa).

In terms of domain architecture, YrdC-like spans 3–187 (QVTPSQISGI…IQTGHIFRQG (185 aa)).

The protein belongs to the SUA5 family. TsaC subfamily.

It localises to the cytoplasm. The enzyme catalyses L-threonine + hydrogencarbonate + ATP = L-threonylcarbamoyladenylate + diphosphate + H2O. In terms of biological role, required for the formation of a threonylcarbamoyl group on adenosine at position 37 (t(6)A37) in tRNAs that read codons beginning with adenine. Catalyzes the conversion of L-threonine, HCO(3)(-)/CO(2) and ATP to give threonylcarbamoyl-AMP (TC-AMP) as the acyladenylate intermediate, with the release of diphosphate. The chain is Threonylcarbamoyl-AMP synthase from Shewanella amazonensis (strain ATCC BAA-1098 / SB2B).